Here is a 265-residue protein sequence, read N- to C-terminus: Small ribosomal subunit protein eS4 (265 aa).

The S4 RNA-binding domain maps to 42-104 (LPLILIIRNR…TGENYRLLYD (63 aa)).

It belongs to the eukaryotic ribosomal protein eS4 family.

The protein localises to the cytoplasm. The polypeptide is Small ribosomal subunit protein eS4 (RPS4) (Oryza sativa subsp. japonica (Rice)).